Consider the following 221-residue polypeptide: Small ribosomal subunit protein uS3 (221 aa).

The KH type-2 domain occupies 39 to 108; sequence IRKFVKKRSY…NVIINIVEVK (70 aa).

Belongs to the universal ribosomal protein uS3 family. In terms of assembly, part of the 30S ribosomal subunit. Forms a tight complex with proteins S10 and S14.

Functionally, binds the lower part of the 30S subunit head. Binds mRNA in the 70S ribosome, positioning it for translation. The chain is Small ribosomal subunit protein uS3 from Clostridium novyi (strain NT).